Here is a 197-residue protein sequence, read N- to C-terminus: Alkyl hydroperoxide reductase C (197 aa).

In terms of domain architecture, Thioredoxin spans 2–163 (VLVTQNAPNF…MIRMVDALDF (162 aa)). Cys50 functions as the Cysteine sulfenic acid (-SOH) intermediate in the catalytic mechanism.

It belongs to the peroxiredoxin family. AhpC/Prx1 subfamily. Homodimer; disulfide-linked, upon oxidation. 5 homodimers assemble to form a ring-like decamer.

The protein localises to the cytoplasm. It carries out the reaction a hydroperoxide + NADH + H(+) = an alcohol + NAD(+) + H2O. In terms of biological role, thiol-specific peroxidase that catalyzes the reduction of hydrogen peroxide and organic hydroperoxides to water and alcohols, respectively. Plays a role in cell protection against oxidative stress by detoxifying peroxides. The chain is Alkyl hydroperoxide reductase C from Buchnera aphidicola subsp. Acyrthosiphon pisum (strain APS) (Acyrthosiphon pisum symbiotic bacterium).